We begin with the raw amino-acid sequence, 311 residues long: Ribosomal RNA small subunit methyltransferase H (311 aa).

S-adenosyl-L-methionine contacts are provided by residues 34 to 36 (GGY), Asp51, Phe75, Asp93, and Gln100.

Belongs to the methyltransferase superfamily. RsmH family.

It is found in the cytoplasm. The enzyme catalyses cytidine(1402) in 16S rRNA + S-adenosyl-L-methionine = N(4)-methylcytidine(1402) in 16S rRNA + S-adenosyl-L-homocysteine + H(+). Its function is as follows. Specifically methylates the N4 position of cytidine in position 1402 (C1402) of 16S rRNA. This is Ribosomal RNA small subunit methyltransferase H from Caulobacter vibrioides (strain ATCC 19089 / CIP 103742 / CB 15) (Caulobacter crescentus).